A 266-amino-acid chain; its full sequence is Beta-lactamase OXA-19 (266 aa).

The first 20 residues, 1–20 (MKTFAAYVITACLSSTALAS), serve as a signal peptide directing secretion. S67 (acyl-ester intermediate) is an active-site residue. K70 is subject to N6-carboxylysine. 205–207 (KTG) lines the substrate pocket.

The protein belongs to the class-D beta-lactamase family.

It carries out the reaction a beta-lactam + H2O = a substituted beta-amino acid. The protein is Beta-lactamase OXA-19 (bla) of Pseudomonas aeruginosa.